A 436-amino-acid chain; its full sequence is Histidinol dehydrogenase (436 aa).

Positions 135, 197, and 220 each coordinate NAD(+). Substrate is bound by residues Thr243, Gln265, and His268. Zn(2+)-binding residues include Gln265 and His268. Residues Glu334 and His335 each act as proton acceptor in the active site. Positions 335, 368, 422, and 427 each coordinate substrate. Asp368 lines the Zn(2+) pocket. His427 serves as a coordination point for Zn(2+).

Belongs to the histidinol dehydrogenase family. The cofactor is Zn(2+).

The enzyme catalyses L-histidinol + 2 NAD(+) + H2O = L-histidine + 2 NADH + 3 H(+). Its pathway is amino-acid biosynthesis; L-histidine biosynthesis; L-histidine from 5-phospho-alpha-D-ribose 1-diphosphate: step 9/9. In terms of biological role, catalyzes the sequential NAD-dependent oxidations of L-histidinol to L-histidinaldehyde and then to L-histidine. This chain is Histidinol dehydrogenase, found in Deinococcus radiodurans (strain ATCC 13939 / DSM 20539 / JCM 16871 / CCUG 27074 / LMG 4051 / NBRC 15346 / NCIMB 9279 / VKM B-1422 / R1).